The following is a 123-amino-acid chain: S-adenosylmethionine decarboxylase proenzyme 2 (123 aa).

S65 serves as the catalytic Schiff-base intermediate with substrate; via pyruvic acid. S65 bears the Pyruvic acid (Ser); by autocatalysis mark. Residue H70 is the Proton acceptor; for processing activity of the active site. C85 acts as the Proton donor; for catalytic activity in catalysis.

The protein belongs to the prokaryotic AdoMetDC family. Type 1 subfamily. Heterotetramer of two alpha and two beta chains arranged as a dimer of alpha/beta heterodimers. Pyruvate serves as cofactor. In terms of processing, is synthesized initially as an inactive proenzyme. Formation of the active enzyme involves a self-maturation process in which the active site pyruvoyl group is generated from an internal serine residue via an autocatalytic post-translational modification. Two non-identical subunits are generated from the proenzyme in this reaction, and the pyruvate is formed at the N-terminus of the alpha chain, which is derived from the carboxyl end of the proenzyme. The post-translation cleavage follows an unusual pathway, termed non-hydrolytic serinolysis, in which the side chain hydroxyl group of the serine supplies its oxygen atom to form the C-terminus of the beta chain, while the remainder of the serine residue undergoes an oxidative deamination to produce ammonia and the pyruvoyl group blocking the N-terminus of the alpha chain.

It catalyses the reaction S-adenosyl-L-methionine + H(+) = S-adenosyl 3-(methylsulfanyl)propylamine + CO2. It participates in amine and polyamine biosynthesis; S-adenosylmethioninamine biosynthesis; S-adenosylmethioninamine from S-adenosyl-L-methionine: step 1/1. Functionally, catalyzes the decarboxylation of S-adenosylmethionine to S-adenosylmethioninamine (dcAdoMet), the propylamine donor required for the synthesis of the polyamines spermine and spermidine from the diamine putrescine. The sequence is that of S-adenosylmethionine decarboxylase proenzyme 2 from Bacillus anthracis.